A 318-amino-acid polypeptide reads, in one-letter code: MAILEQPYLDLINKIMIEGHDKNDRTGTGTRSYFGAQMRFDLSKGFPILTTKKVPFGLIKSELLWFLRGDTNIRFLLEHKNHIWDEWAFKNWVNSDEYTGPDMTDFGLRSQSDPEFNKIYQAELKKFDRRILDDENFAKKYGNLGDVYGAQWRHWQKRDGSFIDQIENVIEQIKNNPDSRRMIVTAWNPEDVPTSALPPCHVMFQFYVVDGKISVQLYQRSGDMFLGVPFNIASYALLLNMIARETGLQVGEFIHTLGDAHIYSNHFSQVKEMLSRKPYESPQLWLNPEKKHIEDFDMQDIKLVDYKHHGTIKAPVAV.

DUMP is bound by residues R25 and 180 to 181 (RR). The active-site Nucleophile is C200. DUMP-binding positions include 220 to 223 (RSGD), N231, and 261 to 263 (HIY). D223 lines the (6R)-5,10-methylene-5,6,7,8-tetrahydrofolate pocket. (6R)-5,10-methylene-5,6,7,8-tetrahydrofolate is bound at residue A317.

Belongs to the thymidylate synthase family. Bacterial-type ThyA subfamily. In terms of assembly, homodimer.

The protein resides in the cytoplasm. It catalyses the reaction dUMP + (6R)-5,10-methylene-5,6,7,8-tetrahydrofolate = 7,8-dihydrofolate + dTMP. It functions in the pathway pyrimidine metabolism; dTTP biosynthesis. Functionally, catalyzes the reductive methylation of 2'-deoxyuridine-5'-monophosphate (dUMP) to 2'-deoxythymidine-5'-monophosphate (dTMP) while utilizing 5,10-methylenetetrahydrofolate (mTHF) as the methyl donor and reductant in the reaction, yielding dihydrofolate (DHF) as a by-product. This enzymatic reaction provides an intracellular de novo source of dTMP, an essential precursor for DNA biosynthesis. In Lactobacillus acidophilus (strain ATCC 700396 / NCK56 / N2 / NCFM), this protein is Thymidylate synthase.